Here is a 686-residue protein sequence, read N- to C-terminus: MRTLLIDNYDSFTHNLFQYIGEATGQPPVVVPNDADWSRLPLEDFDAIVVSPGPGSPDRERDFGISRRAITDSGLPVLGVCLGHQGIAQLFGGTVGLAPEPMHGRVSEVRHTGEDVFRGLPSPFTAVRYHSLAATDLPDELEPLAWSDDGVVMGLRHREKPLWGVQFHPESIGSDFGREIMANFRDLALAHHRARRDAADSPYELHVRRVDVLPDAEEVRRGCLPGEGATFWLDSSSVLEGASRFSFLGDDRGPLAEYLTYRVADGVVSVRGSDGTTTRTRRPFFSYLEEQLERRRVPVAPDLPFEFNLGYVGYLGYELKAETTGDPAHRSPHPDAAFLFADRAIALDHQEGCCYLLALDRRGHDDGARAWLRETAETLTGLAVRVPAEPTPAMVFGVPEAAAGFGPLARARHDKDAYLKRIDECLKEIRNGESYEICLTNMVTAPTEATALPLYSALRAISPVPYGALLEFPELSVLSASPERFLTIGADGGVESKPIKGTRPRGGTAEEDERLRADLAGREKDRAENLMIVDLVRNDLNSVCAIGSVHVPRLFEVETYAPVHQLVSTIRGRLRPGTSTAACVRAAFPGGSMTGAPKKRTMEIIDRLEEGPRGVYSGALGWFALSGAADLSIVIRTIVLADGRAEFGVGGAIVSLSDQEEEFTETVVKARAMVTALDGSAVAGAR.

One can recognise a Glutamine amidotransferase type-1 domain in the interval 2 to 194 (RTLLIDNYDS…RDLALAHHRA (193 aa)). Catalysis depends on Cys81, which acts as the Nucleophile. Active-site residues include His168 and Glu170. The segment at 233–686 (LDSSSVLEGA…LDGSAVAGAR (454 aa)) is PABB component.

In the C-terminal section; belongs to the anthranilate synthase component I family.

It catalyses the reaction chorismate + L-glutamine = 4-amino-4-deoxychorismate + L-glutamate. It functions in the pathway antibiotic biosynthesis. In terms of biological role, involved in chloramphenicol biosynthesis. Catalyzes the biosynthesis of 4-amino-4-deoxychorismate (ADC) from chorismate and glutamine. This is Aminodeoxychorismate synthase from Streptomyces venezuelae (strain ATCC 10712 / CBS 650.69 / DSM 40230 / JCM 4526 / NBRC 13096 / PD 04745).